Reading from the N-terminus, the 556-residue chain is MPRGQKSKARAREKRRLVQDEAQELQDAQAKAGEKGKSPSCSNQDSGDAVASTSTAGFPQKSKSQGEAPTTTARKGGACRRSRKSTRGPREESTSCTRVPRFSENPQNDLLTRKTGMLMQYLLCKYKMKQPASKGEMLKVINRRFKEQLPEILKKASERIQLVFGLEVKEIKPNGGYYTLVSKLDPSVGNALTTSLPFPQNGLLMPLLGVIFLNGNRASEAEIWEFLNVLGIYDGKVHIIFGEPRKLITRDLVKEKYLVYQKEANSDPPSFEFLWGPRAYAETTKMKILEFLAEVNETVPQAFPTHYEEALRDQEERAQAEAVGSPGTSAKDKAEAKVTLVDSSCKYQAESKVTLVDSSCKDQAESKVTLVDPSCKDNAKSKVTLGSSRKYKAKSKVPLVDSSCKDQAESKVTLVDSCKDQAESKVTLVDSSCKDQAESKVTLVDSSCKDQAESKVTLVDPSCKDKAKSKVTLGSSHKYKAKSKVTLVDSSCKDQAESKVTLVDSSCKDQAESKVTLVDPSCKDNAKSKVTLGSSRKYKAKSKVPLVDSSGKDKAV.

A compositionally biased stretch (basic residues) spans 1-15 (MPRGQKSKARAREKR). The tract at residues 1 to 110 (MPRGQKSKAR…RFSENPQNDL (110 aa)) is disordered. A compositionally biased stretch (polar residues) spans 39-73 (PSCSNQDSGDAVASTSTAGFPQKSKSQGEAPTTTA). Over residues 77–87 (GACRRSRKSTR) the composition is skewed to basic residues. The 200-residue stretch at 111–310 (LTRKTGMLMQ…QAFPTHYEEA (200 aa)) folds into the MAGE domain. The tract at residues 315–335 (EERAQAEAVGSPGTSAKDKAE) is disordered. Ser325 carries the phosphoserine modification. 15 tandem repeats follow at residues 334 to 348 (AEAK…CKYQ), 349 to 363 (AESK…CKDQ), 364 to 378 (AESK…CKDN), 379 to 392 (AKSK…RKYK), 393 to 407 (AKSK…CKDQ), 408 to 421 (AESK…CKDQ), 422 to 436 (AESK…CKDQ), 437 to 451 (AESK…CKDQ), 452 to 466 (AESK…CKDK), 467 to 480 (AKSK…HKYK), 481 to 495 (AKSK…CKDQ), 496 to 510 (AESK…CKDQ), 511 to 525 (AESK…CKDN), 526 to 539 (AKSK…RKYK), and 540 to 554 (AKSK…GKDK). The segment at 334-554 (AEAKVTLVDS…PLVDSSGKDK (221 aa)) is 15 X 15 AA approximate tandem repeats.

In terms of tissue distribution, expressed in testis (at protein level).

It localises to the cytoplasm. The protein is Melanoma-associated antigen B4 of Mus musculus (Mouse).